A 291-amino-acid chain; its full sequence is Arabinogalactan O-methyltransferase 2 (291 aa).

Residues 18-38 (WFLAVALAGLIGGAMLITSFI) traverse the membrane as a helical segment.

Belongs to the methyltransferase superfamily.

The protein resides in the golgi apparatus membrane. In terms of biological role, involved in the methylation of glucuronic acid of different plant cell wall component, but mainly on side chains of arabinogalactans. The sequence is that of Arabinogalactan O-methyltransferase 2 from Arabidopsis thaliana (Mouse-ear cress).